The following is a 150-amino-acid chain: UPF0208 membrane protein VIBHAR_02941 (150 aa).

Transmembrane regions (helical) follow at residues 42–62 and 70–90; these read FGIKVMPAVAAISVLTQMAFN and AIVVALFAISMPLQGMWWLGS.

The protein belongs to the UPF0208 family.

Its subcellular location is the cell inner membrane. This is UPF0208 membrane protein VIBHAR_02941 from Vibrio campbellii (strain ATCC BAA-1116).